Here is a 265-residue protein sequence, read N- to C-terminus: Anaphase-promoting complex subunit 9 (265 aa).

In terms of assembly, the APC/C is composed of at least 13 subunits that stay tightly associated throughout the cell cycle: APC1, APC2, APC4, APC5, APC9, APC11, CDC16, CDC23, CDC26, CDC27, DOC1, MND2 and SWM1.

The protein resides in the cytoplasm. Its subcellular location is the nucleus. The protein operates within protein modification; protein ubiquitination. In terms of biological role, component of the anaphase promoting complex/cyclosome (APC/C), a cell cycle-regulated E3 ubiquitin-protein ligase complex that controls progression through mitosis and the G1 phase of the cell cycle. The APC/C is thought to confer substrate specificity and, in the presence of ubiquitin-conjugating E2 enzymes, it catalyzes the formation of protein-ubiquitin conjugates that are subsequently degraded by the 26S proteasome. In early mitosis, the APC/C is activated by CDC20 and targets securin PDS1, the B-type cyclin CLB5, and other anaphase inhibitory proteins for proteolysis, thereby triggering the separation of sister chromatids at the metaphase-to-anaphase transition. In late mitosis and in G1, degradation of CLB5 allows activation of the APC/C by CDH1, which is needed to destroy CDC20 and the B-type cyclin CLB2 to allow exit from mitosis and creating the low CDK state necessary for cytokinesis and for reforming prereplicative complexes in G1 prior to another round of replication. The protein is Anaphase-promoting complex subunit 9 (APC9) of Saccharomyces cerevisiae (strain ATCC 204508 / S288c) (Baker's yeast).